Here is a 346-residue protein sequence, read N- to C-terminus: Dimethyladenosine transferase 1, mitochondrial (346 aa).

The transit peptide at 1 to 27 (MATQGVLAKYRLPPLPTIGEIIKLFNL) directs the protein to the mitochondrion. Positions 36, 38, 63, 85, 86, 111, 112, and 141 each coordinate S-adenosyl-L-methionine.

The protein belongs to the class I-like SAM-binding methyltransferase superfamily. rRNA adenine N(6)-methyltransferase family. KsgA subfamily.

It localises to the mitochondrion. It catalyses the reaction adenosine(N)/adenosine(N+1) in rRNA + 4 S-adenosyl-L-methionine = N(6)-dimethyladenosine(N)/N(6)-dimethyladenosine(N+1) in rRNA + 4 S-adenosyl-L-homocysteine + 4 H(+). Functionally, mitochondrial methyltransferase which uses S-adenosyl methionine to dimethylate two highly conserved adjacent adenosine residues (A1583 and A1584) within the loop of helix 45 at the 3-prime end of 12S rRNA, thereby regulating the assembly or stability of the small subunit of the mitochondrial ribosome. Also required for basal transcription of mitochondrial DNA, probably via its interaction with POLRMT and TFAM. Stimulates transcription independently of the methyltransferase activity. This Xenopus tropicalis (Western clawed frog) protein is Dimethyladenosine transferase 1, mitochondrial (tfb1m).